Here is a 782-residue protein sequence, read N- to C-terminus: Cleavage and polyadenylation specificity factor subunit 2 (782 aa).

Positions 407 to 416 are enriched in basic and acidic residues; sequence KKLEQSKEAD. The segment at 407–449 is disordered; it reads KKLEQSKEADIDSSDESDIEEDIDQPSAHKTKHDLMMKGEGSR. Over residues 417-430 the composition is skewed to acidic residues; the sequence is IDSSDESDIEEDID. Residues Ser419, Ser420, and Ser423 each carry the phosphoserine modification. Residues 439–449 are compositionally biased toward basic and acidic residues; it reads HDLMMKGEGSR. Residue Ser660 is modified to Phosphoserine.

Belongs to the metallo-beta-lactamase superfamily. RNA-metabolizing metallo-beta-lactamase-like family. CPSF2/YSH1 subfamily. As to quaternary structure, component of the cleavage and polyadenylation specificity factor (CPSF) complex, composed of CPSF1, CPSF2, CPSF3, CPSF4 and FIP1L1. Interacts with CPSF3, CSTF2 and SYMPK. Interacts with ZC3H3.

It localises to the nucleus. Functionally, component of the cleavage and polyadenylation specificity factor (CPSF) complex that play a key role in pre-mRNA 3'-end formation, recognizing the AAUAAA signal sequence and interacting with poly(A) polymerase and other factors to bring about cleavage and poly(A) addition. Involved in the histone 3' end pre-mRNA processing. This Homo sapiens (Human) protein is Cleavage and polyadenylation specificity factor subunit 2 (CPSF2).